Consider the following 325-residue polypeptide: Ribonucleoside-diphosphate reductase small chain (325 aa).

Positions 76, 107, and 110 each coordinate Fe cation. Tyrosine 114 is an active-site residue. Fe cation is bound by residues glutamate 170, glutamate 204, and histidine 207.

This sequence belongs to the ribonucleoside diphosphate reductase small chain family. Heterodimer of a large and a small subunit. The cofactor is Fe cation.

It catalyses the reaction a 2'-deoxyribonucleoside 5'-diphosphate + [thioredoxin]-disulfide + H2O = a ribonucleoside 5'-diphosphate + [thioredoxin]-dithiol. Functionally, provides the precursors necessary for DNA synthesis. Catalyzes the biosynthesis of deoxyribonucleotides from the corresponding ribonucleotides. The polypeptide is Ribonucleoside-diphosphate reductase small chain (Encephalitozoon cuniculi (strain GB-M1) (Microsporidian parasite)).